Reading from the N-terminus, the 107-residue chain is uncharacterized protein (107 aa).

Residues phenylalanine 34–tyrosine 107 adopt a coiled-coil conformation.

This is an uncharacterized protein from Dictyostelium discoideum (Social amoeba).